The sequence spans 525 residues: Bestrophin homolog 15 (525 aa).

The next 4 membrane-spanning stretches (helical) occupy residues 36–56 (LFMF…NLII), 71–91 (FDQN…VTII), 237–257 (LAYP…ALIA), and 273–293 (ILYP…VVGW).

Belongs to the anion channel-forming bestrophin (TC 1.A.46) family. Calcium-sensitive chloride channel subfamily. In terms of assembly, forms oligomers.

The protein resides in the cell membrane. Forms chloride channels. The protein is Bestrophin homolog 15 (best-15) of Caenorhabditis elegans.